Consider the following 124-residue polypeptide: Small ribosomal subunit protein uS13 (124 aa).

Basic residues predominate over residues 92 to 117 (RRGLPVRGQRTKSNARTRKGPRKTVA). The disordered stretch occupies residues 92-124 (RRGLPVRGQRTKSNARTRKGPRKTVANKKIESK).

It belongs to the universal ribosomal protein uS13 family. In terms of assembly, part of the 30S ribosomal subunit. Forms a loose heterodimer with protein S19. Forms two bridges to the 50S subunit in the 70S ribosome.

Functionally, located at the top of the head of the 30S subunit, it contacts several helices of the 16S rRNA. In the 70S ribosome it contacts the 23S rRNA (bridge B1a) and protein L5 of the 50S subunit (bridge B1b), connecting the 2 subunits; these bridges are implicated in subunit movement. Contacts the tRNAs in the A and P-sites. The sequence is that of Small ribosomal subunit protein uS13 from Mycoplasmoides gallisepticum (strain R(low / passage 15 / clone 2)) (Mycoplasma gallisepticum).